The following is a 134-amino-acid chain: Small ribosomal subunit protein uS8c (134 aa).

The protein belongs to the universal ribosomal protein uS8 family. Part of the 30S ribosomal subunit.

Its subcellular location is the plastid. Its function is as follows. One of the primary rRNA binding proteins, it binds directly to 16S rRNA central domain where it helps coordinate assembly of the platform of the 30S subunit. The protein is Small ribosomal subunit protein uS8c (rps8) of Epifagus virginiana (Beechdrops).